The primary structure comprises 302 residues: DNA-binding transcriptional activator HetR (302 aa).

Residue S153 is part of the active site.

Belongs to the peptidase S48 family. Homodimer; disulfide-linked.

Its function is as follows. Might be involved in temporal and/or spatial regulation of nitrogen fixation. Dimerization is required for DNA-binding. Has both a protease and a DNA-binding activity. The polypeptide is DNA-binding transcriptional activator HetR (Trichodesmium erythraeum (strain IMS101)).